Consider the following 310-residue polypeptide: Porphobilinogen deaminase (310 aa).

Cys-242 carries the S-(dipyrrolylmethanemethyl)cysteine modification.

The protein belongs to the HMBS family. Monomer. Dipyrromethane serves as cofactor.

The catalysed reaction is 4 porphobilinogen + H2O = hydroxymethylbilane + 4 NH4(+). The protein operates within porphyrin-containing compound metabolism; protoporphyrin-IX biosynthesis; coproporphyrinogen-III from 5-aminolevulinate: step 2/4. Its function is as follows. Tetrapolymerization of the monopyrrole PBG into the hydroxymethylbilane pre-uroporphyrinogen in several discrete steps. The protein is Porphobilinogen deaminase of Shewanella oneidensis (strain ATCC 700550 / JCM 31522 / CIP 106686 / LMG 19005 / NCIMB 14063 / MR-1).